The primary structure comprises 361 residues: MKAKVIVGMSGGVDSSVAAWLLKEQGYQVEGLFMKNWEQDDHNDYCPAAKDLADAQAVCNQLRIPLHTVNFSKEYWDRVFAYFLSEYEKGRTPNPDVLCNKEIKFNAFLNHALTLGADYIATGHYAKNTIEGSIGYLFKAKDREKDQTYFLHAVEPEALSKTIFPIGDFTKPQIREFAKQLGLVTHAKKDSTGICFIGEKRFKTFLNEFILAKPGEIKSTGGKTLGQHDGLMFYTLGQRQGLGIGGLQNSTDEPWYVVDKDIASNTLYVAQGSQHPMLYSQGLICGPIHWLADYENHLPLTCFAKTRYRQTDQACMISPPDNNQHYVMFSSPQRAITPGQFIVFYEKNQCLGGATIEQIIR.

ATP is bound by residues G8 to S15 and M34. The interval N94–D96 is interaction with target base in tRNA. Residue C99 is the Nucleophile of the active site. Cysteines 99 and 195 form a disulfide. ATP is bound at residue G123. The tract at residues K145–Q147 is interaction with tRNA. C195 acts as the Cysteine persulfide intermediate in catalysis. The tract at residues R307–Y308 is interaction with tRNA.

It belongs to the MnmA/TRMU family.

The protein resides in the cytoplasm. The enzyme catalyses S-sulfanyl-L-cysteinyl-[protein] + uridine(34) in tRNA + AH2 + ATP = 2-thiouridine(34) in tRNA + L-cysteinyl-[protein] + A + AMP + diphosphate + H(+). In terms of biological role, catalyzes the 2-thiolation of uridine at the wobble position (U34) of tRNA, leading to the formation of s(2)U34. The polypeptide is tRNA-specific 2-thiouridylase MnmA (Legionella pneumophila subsp. pneumophila (strain Philadelphia 1 / ATCC 33152 / DSM 7513)).